A 677-amino-acid polypeptide reads, in one-letter code: Zinc finger CCCH domain-containing protein 23 (677 aa).

Positions 66 to 117 are disordered; sequence PPQAASSSPTVPAAHSPFLLSRQNSGRCPAPSPSSWAQAQPFSRSNSMGNGG. Positions 69-82 are enriched in low complexity; the sequence is AASSSPTVPAAHSP. Residues 98–113 show a composition bias toward polar residues; sequence PSSWAQAQPFSRSNSM. The C3H1-type zinc-finger motif lies at 228–255; it reads GFGWKPCLYYARGFCKNGSTCRFVHGGL. Positions 359-435 constitute an RRM domain; sequence RQIYLTFPAD…RVLVKPYKEK (77 aa). Residues 480-513 adopt a coiled-coil conformation; that stretch reads ANELMLRRKLEEQQQAAELQQAIDLHSRRLIGLQ. Polar residues predominate over residues 535–562; the sequence is TPITNAFTSGQPGATTIVESPPSSTGQL. The tract at residues 535–607 is disordered; the sequence is TPITNAFTSG…EHNLPDSPFA (73 aa). Over residues 589–601 the composition is skewed to basic and acidic residues; the sequence is RNADSDQSGEHNL.

The sequence is that of Zinc finger CCCH domain-containing protein 23 from Oryza sativa subsp. japonica (Rice).